The primary structure comprises 327 residues: Phenylalanine--tRNA ligase alpha subunit (327 aa).

Position 252 (glutamate 252) interacts with Mg(2+).

Belongs to the class-II aminoacyl-tRNA synthetase family. Phe-tRNA synthetase alpha subunit type 1 subfamily. In terms of assembly, tetramer of two alpha and two beta subunits. Mg(2+) is required as a cofactor.

The protein localises to the cytoplasm. It catalyses the reaction tRNA(Phe) + L-phenylalanine + ATP = L-phenylalanyl-tRNA(Phe) + AMP + diphosphate + H(+). This chain is Phenylalanine--tRNA ligase alpha subunit, found in Vibrio campbellii (strain ATCC BAA-1116).